The sequence spans 162 residues: Large ribosomal subunit protein bL17 (162 aa).

A compositionally biased stretch (basic and acidic residues) spans 125–140; it reads AAKEAPAKEVAEEKAA. A disordered region spans residues 125–162; it reads AAKEAPAKEVAEEKAAKPAKKAAPKKAEKEEAEDAAEA.

Belongs to the bacterial ribosomal protein bL17 family. Part of the 50S ribosomal subunit. Contacts protein L32.

The chain is Large ribosomal subunit protein bL17 from Oleidesulfovibrio alaskensis (strain ATCC BAA-1058 / DSM 17464 / G20) (Desulfovibrio alaskensis).